A 227-amino-acid polypeptide reads, in one-letter code: Uridylate kinase (227 aa).

ATP is bound at residue 9-10; it reads GS. UMP is bound at residue glycine 44. ATP is bound by residues glycine 45 and arginine 49. Residues aspartate 66 and 114–120 each bind UMP; that span reads TVPGHTT. ATP is bound by residues threonine 140, phenylalanine 146, and aspartate 149.

Belongs to the UMP kinase family. As to quaternary structure, homohexamer.

Its subcellular location is the cytoplasm. The catalysed reaction is UMP + ATP = UDP + ADP. It participates in pyrimidine metabolism; CTP biosynthesis via de novo pathway; UDP from UMP (UMPK route): step 1/1. Inhibited by UTP. Catalyzes the reversible phosphorylation of UMP to UDP. In Natronomonas pharaonis (strain ATCC 35678 / DSM 2160 / CIP 103997 / JCM 8858 / NBRC 14720 / NCIMB 2260 / Gabara) (Halobacterium pharaonis), this protein is Uridylate kinase.